The primary structure comprises 366 residues: 3-dehydroquinate synthase (366 aa).

Residues D75 to K80, G109 to D113, T133 to T134, K146, K155, and C173 to T176 contribute to the NAD(+) site. Residues E188, H251, and H268 each contribute to the Zn(2+) site.

It belongs to the sugar phosphate cyclases superfamily. Dehydroquinate synthase family. NAD(+) is required as a cofactor. Requires Co(2+) as cofactor. It depends on Zn(2+) as a cofactor.

The protein localises to the cytoplasm. It carries out the reaction 7-phospho-2-dehydro-3-deoxy-D-arabino-heptonate = 3-dehydroquinate + phosphate. Its pathway is metabolic intermediate biosynthesis; chorismate biosynthesis; chorismate from D-erythrose 4-phosphate and phosphoenolpyruvate: step 2/7. Catalyzes the conversion of 3-deoxy-D-arabino-heptulosonate 7-phosphate (DAHP) to dehydroquinate (DHQ). This Vibrio parahaemolyticus serotype O3:K6 (strain RIMD 2210633) protein is 3-dehydroquinate synthase.